The primary structure comprises 53 residues: Large ribosomal subunit protein eL40 (53 aa).

Belongs to the eukaryotic ribosomal protein eL40 family.

This Pyrobaculum arsenaticum (strain DSM 13514 / JCM 11321 / PZ6) protein is Large ribosomal subunit protein eL40.